A 247-amino-acid chain; its full sequence is Pyridoxine 5'-phosphate synthase (247 aa).

Asn9 is a 3-amino-2-oxopropyl phosphate binding site. 1-deoxy-D-xylulose 5-phosphate is bound at residue 11-12 (DH). Arg20 is a binding site for 3-amino-2-oxopropyl phosphate. His45 acts as the Proton acceptor in catalysis. Residues Arg47 and His52 each contribute to the 1-deoxy-D-xylulose 5-phosphate site. Glu72 (proton acceptor) is an active-site residue. Thr102 serves as a coordination point for 1-deoxy-D-xylulose 5-phosphate. The active-site Proton donor is the His193. 3-amino-2-oxopropyl phosphate is bound by residues Gly194 and 215–216 (GH).

The protein belongs to the PNP synthase family. Homooctamer; tetramer of dimers.

It localises to the cytoplasm. The catalysed reaction is 3-amino-2-oxopropyl phosphate + 1-deoxy-D-xylulose 5-phosphate = pyridoxine 5'-phosphate + phosphate + 2 H2O + H(+). It functions in the pathway cofactor biosynthesis; pyridoxine 5'-phosphate biosynthesis; pyridoxine 5'-phosphate from D-erythrose 4-phosphate: step 5/5. In terms of biological role, catalyzes the complicated ring closure reaction between the two acyclic compounds 1-deoxy-D-xylulose-5-phosphate (DXP) and 3-amino-2-oxopropyl phosphate (1-amino-acetone-3-phosphate or AAP) to form pyridoxine 5'-phosphate (PNP) and inorganic phosphate. This chain is Pyridoxine 5'-phosphate synthase, found in Blochmanniella floridana.